A 506-amino-acid chain; its full sequence is MFTLVGLCLTIVHVAFAVVYFYLTWYHKYWDKRGVVTAEPLTILGSYPGILINKSRSLILDVQDVYNKYKDKYRTVGTFITRQPQLLVLDPALAHEILVDKFSHFRDTITSSFVGHNPDDKYVAGSPFFSAGDKWKRLRSENVGGLTPSRLKMAYSIWEQSGRKLVEYIERARREQGDIIETRDLAYRFTANAMADFIWGIDAGSLSGKVGEIGDFQKTSTDWSAHAFSSMIRFNKTLVAIFVRKLFSMRFFTKATDEFFLRLTQDAVNLRQGGSGEGRTDYLSHLIQLQQRGNSIHDSVGHALTVHLDGFETSGAVLYHMLYSLSEHHEEQEKLRSEILEALASEGQISYDQINNLPYLDQCFNESLRLTTPIGFFMRICTKPTQINLGDDKTLDLEPGVTVMVPAYQYHHDNDIYPEASEFRPDRFENGAASVLTKRGCFLPFGDGPRICLGMRVGQLSVKTAIVHILSNYQVEQMKKVPLGADSGMGIFLNGDVELKYTKLQK.

Phosphothreonine occurs at positions 75, 78, and 81. Cys452 is a heme binding site.

The protein belongs to the cytochrome P450 family. Heme serves as cofactor.

Its subcellular location is the endoplasmic reticulum membrane. The protein localises to the microsome membrane. Functionally, may be involved in the metabolism of insect hormones and in the breakdown of synthetic insecticides. This chain is Probable cytochrome P450 309a1 (Cyp309a1), found in Drosophila melanogaster (Fruit fly).